Reading from the N-terminus, the 308-residue chain is Ribosomal RNA small subunit methyltransferase H (308 aa).

S-adenosyl-L-methionine contacts are provided by residues 46-48 (AGH), aspartate 63, tyrosine 87, aspartate 108, and glutamine 115. The disordered stretch occupies residues 269–308 (TKRPVEASEEERGRNPRARSAKLRAAEKVAAPEGLPEVEV). Basic and acidic residues predominate over residues 271 to 282 (RPVEASEEERGR).

It belongs to the methyltransferase superfamily. RsmH family.

It localises to the cytoplasm. It catalyses the reaction cytidine(1402) in 16S rRNA + S-adenosyl-L-methionine = N(4)-methylcytidine(1402) in 16S rRNA + S-adenosyl-L-homocysteine + H(+). In terms of biological role, specifically methylates the N4 position of cytidine in position 1402 (C1402) of 16S rRNA. This is Ribosomal RNA small subunit methyltransferase H from Deinococcus geothermalis (strain DSM 11300 / CIP 105573 / AG-3a).